A 459-amino-acid chain; its full sequence is Cysteine--tRNA ligase (459 aa).

C28 provides a ligand contact to Zn(2+). The 'HIGH' region signature appears at 30 to 40 (VTVYDLCHIGH). 3 residues coordinate Zn(2+): C209, H234, and E238. A 'KMSKS' region motif is present at residues 266–270 (KMSKS). Residue K269 participates in ATP binding.

The protein belongs to the class-I aminoacyl-tRNA synthetase family. As to quaternary structure, monomer. The cofactor is Zn(2+).

It localises to the cytoplasm. The catalysed reaction is tRNA(Cys) + L-cysteine + ATP = L-cysteinyl-tRNA(Cys) + AMP + diphosphate. The chain is Cysteine--tRNA ligase from Histophilus somni (strain 129Pt) (Haemophilus somnus).